The primary structure comprises 331 residues: High-affinity nickel-transport protein NixA (331 aa).

A run of 7 helical transmembrane segments spans residues 3–23 (LWFPYFLAIVFLHALGLALLF), 77–97 (MGHSSVVILMTIISAFAIAWA), 110–130 (VVGTLVSGLFLLIIGLLNAII), 184–204 (PVGFLFGLGFDTASEIALLAL), 213–233 (VVGMLSLPILFAAGMSLFDTL), 259–279 (ITALSVFIALFIGLIELFQVI), and 302–322 (DLGYYLVGLFVIAFLGSFFLW).

The protein belongs to the NiCoT transporter (TC 2.A.52) family.

The protein resides in the cell inner membrane. Functionally, high-affinity nickel intake protein. Imports nickel ions in an energy-dependent fashion. Necessary for the expression of catalytically active urease. The polypeptide is High-affinity nickel-transport protein NixA (nixA) (Helicobacter pylori (strain J99 / ATCC 700824) (Campylobacter pylori J99)).